Consider the following 729-residue polypeptide: E3 ubiquitin-protein ligase SH3RF2 (729 aa).

Residues 12–53 (CPVCFEKLDVTAKVLPCQHTFCKPCLQRVFKAHKELRCPECR) form an RING-type zinc finger. The segment at 78-105 (SGQSSGRGGSFRRPGTMTLQDGRKSRTN) is disordered. SH3 domains lie at 125 to 184 (DGVP…VIKQ) and 187 to 252 (QPPP…PNLT). The segment at 258–297 (EKNKGRQSSRTKNLSLVSSSSRGNTSTLRRGPGSRRKVPG) is disordered. The span at 263–285 (RQSSRTKNLSLVSSSSRGNTSTL) shows a compositional bias: polar residues. The tract at residues 370 to 459 (VVSLPGSQQH…RSPGLYTTWT (90 aa)) is interaction with PAK4. One can recognise an SH3 3 domain in the interval 380–441 (LSANMFVALH…PNNYVIPIFR (62 aa)). Disordered stretches follow at residues 497 to 526 (STAG…QRPL) and 610 to 677 (KSEP…SQPE). Residues 517–526 (RKNGSLQRPL) show a composition bias toward polar residues. The interval 641–646 (KTVRFQ) is interaction with PPP1CA. Ser-649 carries the post-translational modification Phosphoserine.

Belongs to the SH3RF family. In terms of assembly, interacts with FASLG and PPP1CA. Interacts with PAK4 and TNFRSF1A. Interacts with DLK1, MAP3K10/MLK2, MAPK8IP1/JIP1, MAPK8IP2/JIP2 and MAPK8IP3/JIP3. Interacts with RAC1 (both active GTP- or inactive GDP-bound forms). In terms of processing, autoubiquitinated. Heart (at protein level). Up-regulated in colon cancer tissues as compared to normal colon tissues (at protein level). Testis. In the heart, present in the apex, left atrium, right atrium, left ventricle and right ventricle, but not in the aorta.

The protein localises to the nucleus. The catalysed reaction is S-ubiquitinyl-[E2 ubiquitin-conjugating enzyme]-L-cysteine + [acceptor protein]-L-lysine = [E2 ubiquitin-conjugating enzyme]-L-cysteine + N(6)-ubiquitinyl-[acceptor protein]-L-lysine.. It participates in protein modification; protein ubiquitination. Functionally, has E3 ubiquitin-protein ligase activity. Acts as an anti-apoptotic regulator of the JNK pathway by ubiquitinating and promoting the degradation of SH3RF1, a scaffold protein that is required for pro-apoptotic JNK activation. Facilitates TNF-alpha-mediated recruitment of adapter proteins TRADD and RIPK1 to TNFRSF1A and regulates PAK4 protein stability via inhibition of its ubiquitin-mediated proteasomal degradation. Inhibits PPP1CA phosphatase activity. In Homo sapiens (Human), this protein is E3 ubiquitin-protein ligase SH3RF2 (SH3RF2).